Consider the following 255-residue polypeptide: Triosephosphate isomerase (255 aa).

9 to 11 (NWK) contributes to the substrate binding site. His-95 acts as the Electrophile in catalysis. Catalysis depends on Glu-167, which acts as the Proton acceptor. Substrate contacts are provided by residues Gly-173, Ser-212, and 233–234 (GG).

It belongs to the triosephosphate isomerase family. Homodimer.

It localises to the cytoplasm. The enzyme catalyses D-glyceraldehyde 3-phosphate = dihydroxyacetone phosphate. The protein operates within carbohydrate biosynthesis; gluconeogenesis. It functions in the pathway carbohydrate degradation; glycolysis; D-glyceraldehyde 3-phosphate from glycerone phosphate: step 1/1. In terms of biological role, involved in the gluconeogenesis. Catalyzes stereospecifically the conversion of dihydroxyacetone phosphate (DHAP) to D-glyceraldehyde-3-phosphate (G3P). This Serratia proteamaculans (strain 568) protein is Triosephosphate isomerase.